Here is a 159-residue protein sequence, read N- to C-terminus: Putative ribosomal RNA large subunit methyltransferase H (159 aa).

Residues L76, G108, and 127 to 132 (FSKMTF) each bind S-adenosyl-L-methionine.

It belongs to the RNA methyltransferase RlmH family.

The protein resides in the cytoplasm. The catalysed reaction is pseudouridine(1915) in 23S rRNA + S-adenosyl-L-methionine = N(3)-methylpseudouridine(1915) in 23S rRNA + S-adenosyl-L-homocysteine + H(+). In terms of biological role, specifically methylates the pseudouridine at position 1915 (m3Psi1915) in 23S rRNA. This Methanococcus maripaludis (strain DSM 14266 / JCM 13030 / NBRC 101832 / S2 / LL) protein is Putative ribosomal RNA large subunit methyltransferase H.